Reading from the N-terminus, the 235-residue chain is Regulator of G-protein signaling 18 (235 aa).

A Phosphoserine modification is found at Ser49. The 117-residue stretch at 86-202 (SFDKLLSHRD…LKSEIYLHLI (117 aa)) folds into the RGS domain. Phosphoserine is present on residues Ser216 and Ser218.

The protein resides in the cytoplasm. In terms of biological role, inhibits signal transduction by increasing the GTPase activity of G protein alpha subunits thereby driving them into their inactive GDP-bound form. Binds to G(i) alpha-1, G(i) alpha-2, G(i) alpha-3 and G(q) alpha. This chain is Regulator of G-protein signaling 18 (Rgs18), found in Rattus norvegicus (Rat).